A 711-amino-acid chain; its full sequence is Ribosomal RNA large subunit methyltransferase K/L (711 aa).

The THUMP domain occupies 43-154 (LAYRITLWTR…NGVITIAMNF (112 aa)).

Belongs to the methyltransferase superfamily. RlmKL family.

The protein localises to the cytoplasm. The catalysed reaction is guanosine(2445) in 23S rRNA + S-adenosyl-L-methionine = N(2)-methylguanosine(2445) in 23S rRNA + S-adenosyl-L-homocysteine + H(+). It catalyses the reaction guanosine(2069) in 23S rRNA + S-adenosyl-L-methionine = N(2)-methylguanosine(2069) in 23S rRNA + S-adenosyl-L-homocysteine + H(+). Specifically methylates the guanine in position 2445 (m2G2445) and the guanine in position 2069 (m7G2069) of 23S rRNA. The chain is Ribosomal RNA large subunit methyltransferase K/L from Shewanella oneidensis (strain ATCC 700550 / JCM 31522 / CIP 106686 / LMG 19005 / NCIMB 14063 / MR-1).